The following is a 188-amino-acid chain: MSRGGFGGLCLGLVVMRCQPLRRALCLLGDNMQFYKADEYQASCENLYRKYELEIAALLPDASIEHIGTSSIPNAVSKGDLDILVGVNGKELENAVKLLSTLGFNEKSDTLRTPELCMLENSSGEDVAFQVVANGSEFEFFVGFRDKLRKNPELVQRYNELKISCTGWSHEEYRRKKSAFIERVLGQA.

This sequence belongs to the UPF0157 (GrpB) family.

The sequence is that of UPF0157 protein VC_A0354 from Vibrio cholerae serotype O1 (strain ATCC 39315 / El Tor Inaba N16961).